A 192-amino-acid chain; its full sequence is Imidazoleglycerol-phosphate dehydratase (192 aa).

Belongs to the imidazoleglycerol-phosphate dehydratase family.

Its subcellular location is the cytoplasm. The enzyme catalyses D-erythro-1-(imidazol-4-yl)glycerol 3-phosphate = 3-(imidazol-4-yl)-2-oxopropyl phosphate + H2O. The protein operates within amino-acid biosynthesis; L-histidine biosynthesis; L-histidine from 5-phospho-alpha-D-ribose 1-diphosphate: step 6/9. The polypeptide is Imidazoleglycerol-phosphate dehydratase (Staphylococcus saprophyticus subsp. saprophyticus (strain ATCC 15305 / DSM 20229 / NCIMB 8711 / NCTC 7292 / S-41)).